The primary structure comprises 505 residues: AMP phosphorylase (505 aa).

AMP is bound by residues G170, 196-201 (SRAITS), and T205. Residue D258 is the Proton donor of the active site. S266 and K290 together coordinate AMP.

The protein belongs to the thymidine/pyrimidine-nucleoside phosphorylase family. Type 2 subfamily.

It catalyses the reaction AMP + phosphate = alpha-D-ribose 1,5-bisphosphate + adenine. The enzyme catalyses CMP + phosphate = cytosine + alpha-D-ribose 1,5-bisphosphate. The catalysed reaction is UMP + phosphate = alpha-D-ribose 1,5-bisphosphate + uracil. Its function is as follows. Catalyzes the conversion of AMP and phosphate to adenine and ribose 1,5-bisphosphate (R15P). Exhibits phosphorylase activity toward CMP and UMP in addition to AMP. Functions in an archaeal AMP degradation pathway, together with R15P isomerase and RubisCO. In Methanococcus maripaludis (strain C7 / ATCC BAA-1331), this protein is AMP phosphorylase.